Here is a 559-residue protein sequence, read N- to C-terminus: DNA primase (559 aa).

The segment at 37–61 (CPFHEERSASFSVNQIKGFYHCFGC) adopts a CHC2-type zinc-finger fold. Positions 246 to 327 (KQVIVTEGYL…RGGVILFENN (82 aa)) constitute a Toprim domain. Residues Glu252, Asp296, and Asp298 each coordinate Mg(2+).

This sequence belongs to the DnaG primase family. Monomer. The C-terminal domain DnaB-binding domain exists as a dimer in solution. Interacts with DnaB via its C-terminal domain (residues 415-559 of DnaG); up to 3 DnaG fragments bind to a DnaB hexamer. Zn(2+) is required as a cofactor. The cofactor is Mg(2+).

The catalysed reaction is ssDNA + n NTP = ssDNA/pppN(pN)n-1 hybrid + (n-1) diphosphate.. In terms of biological role, RNA polymerase that catalyzes the synthesis of short RNA molecules used as primers for DNA polymerase during DNA replication. Stimulates the 5'-3' DNA helicase activity of DnaB. The sequence is that of DNA primase from Helicobacter pylori (strain ATCC 700392 / 26695) (Campylobacter pylori).